Consider the following 239-residue polypeptide: Splicing factor U2AF 35 kDa subunit (239 aa).

Ala-2 carries the N-acetylalanine modification. The C3H1-type 1 zinc-finger motif lies at 12 to 40 (EKDKVNCSFYFKIGACRHGDRCSRLHNKP). The residue at position 39 (Lys-39) is an N6-methyllysine. Phosphoserine is present on residues Ser-61 and Ser-145. The RRM domain occupies 65–147 (LRCAVSDVEM…QPIHAELSPV (83 aa)). A C3H1-type 2 zinc finger spans residues 149–176 (DFREACCRQYEMGECTRGGFCNFMHLKP). Arg-165 is modified (omega-N-methylarginine). The disordered stretch occupies residues 183 to 239 (RELYGRRRKKHRSRSRSRERRSRSRDRGRGGGGGGGGGGGRERDRRRSRDRERSGRF). A compositionally biased stretch (basic residues) spans 188 to 208 (RRRKKHRSRSRSRERRSRSRD). Gly residues predominate over residues 212 to 221 (GGGGGGGGGG). A compositionally biased stretch (basic and acidic residues) spans 222–239 (GRERDRRRSRDRERSGRF).

It belongs to the splicing factor SR family. In terms of assembly, identified in the spliceosome C complex. Heterodimer with U2AF2. Interacts (via RS domain) with PHF5A (via N-terminus). Interacts with ZRANB2. Interacts with SDE2. Interacts with SF3B1. Expressed in primary spermatocytes and elongating spermatids (at protein level).

Its subcellular location is the nucleus. The protein localises to the nucleus speckle. Its function is as follows. Plays a critical role in both constitutive and enhancer-dependent splicing by mediating protein-protein interactions and protein-RNA interactions required for accurate 3'-splice site selection. Recruits U2 snRNP to the branch point. Directly mediates interactions between U2AF2 and proteins bound to the enhancers and thus may function as a bridge between U2AF2 and the enhancer complex to recruit it to the adjacent intron. The polypeptide is Splicing factor U2AF 35 kDa subunit (U2af1) (Mus musculus (Mouse)).